Consider the following 278-residue polypeptide: 2-heptyl-3-hydroxy-4-quinolone dioxygenase AqdC1 (278 aa).

The 130-residue stretch at 29–158 (PTIVMLPGWC…GWVDSCRALF (130 aa)) folds into the AB hydrolase-1 domain. His-103 lines the substrate pocket. His-250 serves as the catalytic Proton donor/acceptor.

This sequence belongs to the AB hydrolase superfamily.

The catalysed reaction is 2-heptyl-3-hydroxy-4(1H)-quinolone + O2 = N-octanoylanthranilate + CO + H(+). Involved in the degradation of the Pseudomonas aeruginosa quorum sensing signal molecules HHQ (2-heptyl-4-quinolone) and PQS (2-heptyl-3-hydroxy-4-quinolone) to anthranilic acid. Catalyzes the cleavage of PQS to form N-octanoylanthranilic acid and carbon monoxide. In Rhodococcus erythropolis (Arthrobacter picolinophilus), this protein is 2-heptyl-3-hydroxy-4-quinolone dioxygenase AqdC1.